Consider the following 201-residue polypeptide: Recombination protein RecR (201 aa).

The C4-type zinc-finger motif lies at 57-72; the sequence is CADCRTFTEQEHCTIC. The Toprim domain maps to 81–176; the sequence is GQICVVESPA…LASRIAHGVP (96 aa).

The protein belongs to the RecR family.

In terms of biological role, may play a role in DNA repair. It seems to be involved in an RecBC-independent recombinational process of DNA repair. It may act with RecF and RecO. The protein is Recombination protein RecR of Yersinia pestis bv. Antiqua (strain Antiqua).